A 448-amino-acid chain; its full sequence is uncharacterized protein (448 aa).

In terms of tissue distribution, component of the acid-insoluble and acid-soluble organic matrix of the aragonitic skeleton (at protein level).

The protein localises to the secreted. This is an uncharacterized protein from Acropora millepora (Staghorn coral).